The following is a 601-amino-acid chain: DNA ligase (601 aa).

An ATP-binding site is contributed by D258. K260 serves as the catalytic N6-AMP-lysine intermediate. Residues R265, R280, E310, F350, R427, and K433 each contribute to the ATP site.

Belongs to the ATP-dependent DNA ligase family. In terms of assembly, interacts with the PCNA heterotrimer, probably via subunit PCNA3. Requires a divalent metal cation as cofactor.

The enzyme catalyses ATP + (deoxyribonucleotide)n-3'-hydroxyl + 5'-phospho-(deoxyribonucleotide)m = (deoxyribonucleotide)n+m + AMP + diphosphate.. Its activity is regulated as follows. Ligase activity stimulated by PCNA heterotrimer. DNA ligase that seals nicks in double-stranded DNA during DNA replication, DNA recombination and DNA repair. Interaction with PCNA enhances ligase activity. DNA polymerase I, DNA ligase and the flap endonuclease may be constitutively associated with the PCNA heterotrimer forming a scanning complex able to couple DNA synthesis and Okazaki fragment maturation. The sequence is that of DNA ligase from Saccharolobus solfataricus (strain ATCC 35092 / DSM 1617 / JCM 11322 / P2) (Sulfolobus solfataricus).